The primary structure comprises 204 residues: Putative rubrerythrin (204 aa).

In terms of domain architecture, Ferritin-like diiron spans 1-159 (MINNFFVINM…KLLKEVEEGT (159 aa)). Residues glutamate 24, glutamate 57, glutamate 107, glutamate 110, glutamate 141, histidine 144, cysteine 171, cysteine 174, cysteine 187, and cysteine 190 each contribute to the Fe(3+) site. The Rubredoxin-like domain occupies 166 to 204 (PVEWVCRKCGFVHLGKEPPEKCPSCSHPRKYFEVKCEKY).

Homodimer. Possesses two rubredoxin-like centers and two non-sulfur oxo-bridged di-iron centers per dimer. Fe(3+) serves as cofactor.

It is found in the cytoplasm. Its function is as follows. May provide oxidative stress protection via catalytic reduction of intracellular hydrogen peroxide. The polypeptide is Putative rubrerythrin (Methanocaldococcus jannaschii (strain ATCC 43067 / DSM 2661 / JAL-1 / JCM 10045 / NBRC 100440) (Methanococcus jannaschii)).